Here is a 91-residue protein sequence, read N- to C-terminus: Small ribosomal subunit protein uS15c (91 aa).

It belongs to the universal ribosomal protein uS15 family. As to quaternary structure, part of the 30S ribosomal subunit.

The protein resides in the plastid. It localises to the chloroplast. The protein is Small ribosomal subunit protein uS15c (rps15) of Adiantum capillus-veneris (Maidenhair fern).